The primary structure comprises 472 residues: Threonine synthase-like 2 (472 aa).

The residue at position 113 (lysine 113) is an N6-(pyridoxal phosphate)lysine.

The protein belongs to the threonine synthase family. Requires pyridoxal 5'-phosphate as cofactor.

In terms of biological role, acts as a catabolic phospho-lyase on both gamma- and beta-phosphorylated substrates. Degrades O-phospho-threonine (PThr) to alpha-ketobutyrate, ammonia and phosphate. The sequence is that of Threonine synthase-like 2 (thnsl2) from Xenopus laevis (African clawed frog).